The primary structure comprises 817 residues: E3 ubiquitin-protein ligase TRIM9 (817 aa).

An RING-type zinc finger spans residues 10–50; the sequence is CPVCGSFYREPIILPCSHNLCQACARNILVQTPESESPQSR. T41 carries the post-translational modification Phosphothreonine. 4 positions are modified to phosphoserine: S44, S46, S49, and S53. B box-type zinc fingers lie at residues 163–212 and 224–266; these read AAAL…LVPP and RKVS…VKAL. Zn(2+) is bound by residues C168, C171, C193, H198, C229, H232, C252, and H258. A coiled-coil region spans residues 273-340; the sequence is HKSQLSQALN…KAQLLARVNK (68 aa). The COS domain occupies 374–432; that stretch reads IKENDPSGFLQISDALIRRVHLTEDQWGKGTLTPRMTTDFDLSLDNSPLLQSIHQLDFV. The region spanning 440 to 535 is the Fibronectin type-III domain; it reads VPATPILQLE…KTLVLQTSEA (96 aa). The disordered stretch occupies residues 535 to 557; sequence AAGAHETKPMKDTDSEEQTLPFP. Over residues 537-547 the composition is skewed to basic and acidic residues; it reads GAHETKPMKDT. Residues 613–794 form the B30.2/SPRY domain; sequence ETQSASYSQL…VQVSLWAPGL (182 aa).

The protein belongs to the TRIM/RBCC family. As to quaternary structure, interacts with SNAP25. Post-translationally, auto-ubiquitinated. In terms of tissue distribution, brain. Expression is higher in the cerebral cortex and hippocampus (at protein level). Its expression is mainly confined to the central nervous system. The developing neocortex, the dorsal thalamus, the midbrain, the basal area of the hindbrain and spinal cord show high level of expression during embryogenesis. In adult brain, it is detected in the Purkinje cells of the cerebellum, in the hippocampus, and in the cortex.

The protein resides in the cytoplasm. The protein localises to the cell projection. It localises to the dendrite. Its subcellular location is the cytoplasmic vesicle. It is found in the secretory vesicle. The protein resides in the synaptic vesicle. The protein localises to the synapse. It localises to the cytoskeleton. It carries out the reaction S-ubiquitinyl-[E2 ubiquitin-conjugating enzyme]-L-cysteine + [acceptor protein]-L-lysine = [E2 ubiquitin-conjugating enzyme]-L-cysteine + N(6)-ubiquitinyl-[acceptor protein]-L-lysine.. The protein operates within protein modification; protein ubiquitination. In terms of biological role, E3 ubiquitin-protein ligase which ubiquitinates itself in cooperation with an E2 enzyme UBE2D2/UBC4 and serves as a targeting signal for proteasomal degradation. May play a role in regulation of neuronal functions. May act as a regulator of synaptic vesicle exocytosis by controlling the availability of SNAP25 for the SNARE complex formation. This is E3 ubiquitin-protein ligase TRIM9 (Trim9) from Mus musculus (Mouse).